The primary structure comprises 467 residues: tRNA(Ile)-lysidine synthase (467 aa).

35-40 provides a ligand contact to ATP; sequence SGGPDS.

This sequence belongs to the tRNA(Ile)-lysidine synthase family.

Its subcellular location is the cytoplasm. The catalysed reaction is cytidine(34) in tRNA(Ile2) + L-lysine + ATP = lysidine(34) in tRNA(Ile2) + AMP + diphosphate + H(+). Its function is as follows. Ligates lysine onto the cytidine present at position 34 of the AUA codon-specific tRNA(Ile) that contains the anticodon CAU, in an ATP-dependent manner. Cytidine is converted to lysidine, thus changing the amino acid specificity of the tRNA from methionine to isoleucine. The polypeptide is tRNA(Ile)-lysidine synthase (Caldanaerobacter subterraneus subsp. tengcongensis (strain DSM 15242 / JCM 11007 / NBRC 100824 / MB4) (Thermoanaerobacter tengcongensis)).